The following is a 518-amino-acid chain: Putative succinate-semialdehyde dehydrogenase [NADP(+)] 2 (518 aa).

Residues 157–158 (WN), 181–184 (KPDS), and 232–233 (GS) contribute to the NADP(+) site. Glutamate 254 serves as the catalytic Proton acceptor. An NADP(+)-binding site is contributed by leucine 255. The active-site Nucleophile is cysteine 288. Glutamate 386 provides a ligand contact to NADP(+).

It belongs to the aldehyde dehydrogenase family.

It carries out the reaction succinate semialdehyde + NADP(+) + H2O = succinate + NADPH + 2 H(+). Functionally, catalyzes the NADP(+)-dependent oxidation of succinate semialdehyde to succinate. Although it has succinate semialdehyde dehydrogenase activity, is likely to act physiologically on a different aldehyde(s). In Mycobacterium ulcerans (strain Agy99), this protein is Putative succinate-semialdehyde dehydrogenase [NADP(+)] 2 (gabD2).